Reading from the N-terminus, the 154-residue chain is Ascorbate-specific PTS system EIIA component (154 aa).

One can recognise a PTS EIIA type-2 domain in the interval 6-150 (SLAENNSIRL…QEVLDLIDRT (145 aa)). His-68 serves as the catalytic Tele-phosphohistidine intermediate. The residue at position 68 (His-68) is a Phosphohistidine.

The protein localises to the cytoplasm. In terms of biological role, the phosphoenolpyruvate-dependent sugar phosphotransferase system (sugar PTS), a major carbohydrate active transport system, catalyzes the phosphorylation of incoming sugar substrates concomitantly with their translocation across the cell membrane. The enzyme II UlaABC PTS system is involved in ascorbate transport. The sequence is that of Ascorbate-specific PTS system EIIA component (ulaC) from Salmonella paratyphi A (strain ATCC 9150 / SARB42).